A 473-amino-acid chain; its full sequence is Exodeoxyribonuclease I (473 aa).

An Exonuclease domain is found at 9–188; sequence IYDYESFGVN…AMADVYATIA (180 aa). 3 residues coordinate Mg(2+): D11, E13, and D182. Residue E13 participates in substrate binding. In terms of domain architecture, ExoI SH3-like spans 198 to 353; sequence PKLFQYFFEN…KVADIFNEER (156 aa). Residues 356–472 form the ExoI C-terminal domain; it reads ASNDNVETEL…QVYEYGIKLL (117 aa).

In terms of assembly, monomer. Interacts with ssb (via C-terminus); this interaction stimulates the exonuclease activity by recruiting the enzyme to its substrate. The cofactor is Mg(2+).

It carries out the reaction Exonucleolytic cleavage in the 3'- to 5'-direction to yield nucleoside 5'-phosphates.. Its function is as follows. Degrades single-stranded DNA (ssDNA) in a highly processive manner. Also functions as a DNA deoxyribophosphodiesterase that releases deoxyribose-phosphate moieties following the cleavage of DNA at an apurinic/apyrimidinic (AP) site by either an AP endonuclease or AP lyase. Involved in genome maintenance but probably not in phase variation, which contributes to the virulence and disease. This Haemophilus influenzae (strain ATCC 51907 / DSM 11121 / KW20 / Rd) protein is Exodeoxyribonuclease I (sbcB).